Consider the following 217-residue polypeptide: 3,4-dihydroxy-2-butanone 4-phosphate synthase (217 aa).

D-ribulose 5-phosphate is bound by residues Arg37–Glu38, Asp42, Arg150–Thr154, and Glu174. Glu38 provides a ligand contact to Mg(2+). His153 contacts Mg(2+).

This sequence belongs to the DHBP synthase family. In terms of assembly, homodimer. Mg(2+) is required as a cofactor. Mn(2+) serves as cofactor.

It catalyses the reaction D-ribulose 5-phosphate = (2S)-2-hydroxy-3-oxobutyl phosphate + formate + H(+). It participates in cofactor biosynthesis; riboflavin biosynthesis; 2-hydroxy-3-oxobutyl phosphate from D-ribulose 5-phosphate: step 1/1. In terms of biological role, catalyzes the conversion of D-ribulose 5-phosphate to formate and 3,4-dihydroxy-2-butanone 4-phosphate. In Klebsiella pneumoniae (strain 342), this protein is 3,4-dihydroxy-2-butanone 4-phosphate synthase.